Consider the following 585-residue polypeptide: Pyruvate kinase (585 aa).

Residue R32 participates in substrate binding. K(+)-binding residues include N34, S36, D66, and T67. 34–37 is a binding site for ATP; sequence NFSH. Positions 73 and 156 each coordinate ATP. Residue E221 participates in Mg(2+) binding. Substrate-binding residues include G244, D245, and T277. D245 serves as a coordination point for Mg(2+).

The protein belongs to the pyruvate kinase family. In the C-terminal section; belongs to the PEP-utilizing enzyme family. The cofactor is Mg(2+). K(+) serves as cofactor.

It catalyses the reaction pyruvate + ATP = phosphoenolpyruvate + ADP + H(+). It functions in the pathway carbohydrate degradation; glycolysis; pyruvate from D-glyceraldehyde 3-phosphate: step 5/5. This chain is Pyruvate kinase (pyk), found in Staphylococcus aureus (strain bovine RF122 / ET3-1).